The primary structure comprises 65 residues: Small ribosomal subunit protein bS21 (65 aa).

The interval 45 to 65 (GRLKRSRSRRRAQRANEERNS) is disordered. Residues 48-57 (KRSRSRRRAQ) are compositionally biased toward basic residues.

The protein belongs to the bacterial ribosomal protein bS21 family.

This chain is Small ribosomal subunit protein bS21, found in Chlorobium phaeobacteroides (strain DSM 266 / SMG 266 / 2430).